Consider the following 393-residue polypeptide: Nucleosome assembly protein 1-like 1 (393 aa).

The segment covering 1–10 (MANIDNKEQT) has biased composition (basic and acidic residues). Disordered regions lie at residues 1-36 (MANI…NSKA) and 132-165 (ECEW…KEDP). 2 stretches are compositionally biased toward acidic residues: residues 11-30 (ELDQ…EAGE) and 132-144 (ECEW…EDIS). The NAP1L motif signature appears at 126–151 (YEPTEEECEWKVDEEEDISGDLKDKA). The span at 145-165 (GDLKDKAKLEEEKKDEEKEDP) shows a compositional bias: basic and acidic residues. Positions 274–280 (IKKKQKH) match the Nuclear localization signal motif. A compositionally biased stretch (acidic residues) spans 347 to 378 (AIEDDDDDYDEEGEEADDEEGEEEADEDNDPD). Residues 347–393 (AIEDDDDDYDEEGEEADDEEGEEEADEDNDPDYEPKKDQNPAECKQQ) form a disordered region. Positions 379–393 (YEPKKDQNPAECKQQ) are enriched in basic and acidic residues.

It belongs to the nucleosome assembly protein (NAP) family. In terms of assembly, forms homomultimers. Interacts with histone B4. Interacts with the B-type cyclins ccnb1 and ccnb2. In terms of processing, phosphorylated by cyclin B-cdc2 kinase complexes.

It is found in the cytoplasm. The protein resides in the nucleus. Acts as a chaperone for the linker histone to facilitate deposition of histone B4 onto linker DNA. Required for both remodeling of sperm chromatin into nucleosomes, and linker histone binding to nucleosome core dimers. Plays a role in tissue-specific gene regulation. Required for primitive hemopoiesis, acting upstream of tal1/scl. This Xenopus tropicalis (Western clawed frog) protein is Nucleosome assembly protein 1-like 1.